The chain runs to 152 residues: MRGLLGSSWKKFGHAGRGTYEWLTSEPGLPLLETQLQGTQGVSSTQEDVEPFLCILLPATILLFLAFLLLFLYRRCKSPPPQGQVFSIDLPEHPPAGEVTDLLPGLAWSSEDFPYSPLPPEATLPSQCLPPSYEEATRNPPGEEAQGCSPSV.

The helical transmembrane segment at 52–72 threads the bilayer; the sequence is FLCILLPATILLFLAFLLLFL. Positions 117 to 152 are disordered; it reads PLPPEATLPSQCLPPSYEEATRNPPGEEAQGCSPSV.

It is found in the membrane. The protein is Small integral membrane protein 28 of Homo sapiens (Human).